A 256-amino-acid chain; its full sequence is Acetyl-coenzyme A carboxylase carboxyl transferase subunit alpha (256 aa).

A CoA carboxyltransferase C-terminal domain is found at Met1–Gln236.

This sequence belongs to the AccA family. Acetyl-CoA carboxylase is a heterohexamer composed of biotin carboxyl carrier protein (AccB), biotin carboxylase (AccC) and two subunits each of ACCase subunit alpha (AccA) and ACCase subunit beta (AccD).

It is found in the cytoplasm. It catalyses the reaction N(6)-carboxybiotinyl-L-lysyl-[protein] + acetyl-CoA = N(6)-biotinyl-L-lysyl-[protein] + malonyl-CoA. It functions in the pathway lipid metabolism; malonyl-CoA biosynthesis; malonyl-CoA from acetyl-CoA: step 1/1. Functionally, component of the acetyl coenzyme A carboxylase (ACC) complex. First, biotin carboxylase catalyzes the carboxylation of biotin on its carrier protein (BCCP) and then the CO(2) group is transferred by the carboxyltransferase to acetyl-CoA to form malonyl-CoA. The protein is Acetyl-coenzyme A carboxylase carboxyl transferase subunit alpha of Streptococcus equi subsp. zooepidemicus (strain H70).